Here is a 118-residue protein sequence, read N- to C-terminus: Large ribosomal subunit protein bL20 (118 aa).

Belongs to the bacterial ribosomal protein bL20 family.

In terms of biological role, binds directly to 23S ribosomal RNA and is necessary for the in vitro assembly process of the 50S ribosomal subunit. It is not involved in the protein synthesizing functions of that subunit. The polypeptide is Large ribosomal subunit protein bL20 (Azotobacter vinelandii (strain DJ / ATCC BAA-1303)).